The following is a 349-amino-acid chain: MNSYYTEENHGPFELINIGPLPLEEGRCMPECLLAVAVHGALNADKSNAILVPTWYSGTSKAMEQIYIGEGRALDPSKYCIIVVNQIGNGLSSSASNTGGSLAGPGFANVRIGDDVSAQHTLLTEYFGIESLALVVGGSMGAQQTYEWAVRYPDFVKRAAAIAGTARNSEHDFLFTEILIEAITTDPAFQAGLYRSSSAVAAGLERHAKLWTLMGWSPEFFRTGRHKALGFESMQMFVDGFMKRYFAPMDPNNLLTMAWKWQRGDVSRHTGGDLAKALGRIKAKTYVMPISHDQFFTVDDCLSEQKMIPNSEFRPLRSIDGHLGLFGTDAQMLDQLDAHLAELLSSPAY.

The 234-residue stretch at 67-300 (YIGEGRALDP…SHDQFFTVDD (234 aa)) folds into the AB hydrolase-1 domain. Ser139 acts as the Nucleophile in catalysis. Active-site residues include Asp293 and His322.

The protein belongs to the AB hydrolase superfamily. Acetyl esterase family. Homodimer.

It carries out the reaction ethyl acetate + H2O = ethanol + acetate + H(+). Functionally, esterase that catalyzes the hydrolysis of ethyl acetate. Involved in the degradation of short chain methyl ketones (MEK) such as 2-butanone and 2-hexanone. In vitro, can also hydrolyze vinyl acetate, 4-nitrophenyl acetate, methyl acetate, propyl acetate, benzyl acetate and methyl propionate. The highest activities are obtained with acetic acid esters, but the alcohol group also plays an important role, as compounds with two carbon atoms in the alcohol moiety, i.e., vinyl and ethyl acetate, are by far the preferred substrates. In Pseudomonas veronii, this protein is Ethyl acetate hydrolase.